Consider the following 125-residue polypeptide: Glutamyl-tRNA(Gln) amidotransferase subunit C, mitochondrial (125 aa).

This sequence belongs to the GatC family. Subunit of the heterotrimeric GatCAB amidotransferase (AdT) complex, composed of A, B and C subunits.

The protein localises to the mitochondrion. It catalyses the reaction L-glutamyl-tRNA(Gln) + L-glutamine + ATP + H2O = L-glutaminyl-tRNA(Gln) + L-glutamate + ADP + phosphate + H(+). Its function is as follows. Allows the formation of correctly charged Gln-tRNA(Gln) through the transamidation of misacylated Glu-tRNA(Gln) in the mitochondria. The reaction takes place in the presence of glutamine and ATP through an activated gamma-phospho-Glu-tRNA(Gln). This chain is Glutamyl-tRNA(Gln) amidotransferase subunit C, mitochondrial, found in Drosophila mojavensis (Fruit fly).